We begin with the raw amino-acid sequence, 166 residues long: MASGVTVNDEVIKVFNDMKVRKSSTQEEIKKRKKAVLFCLSDDKRQIIVEEAKQILVGDIGDTVEDPYTSFVKLLPLNDCRYALYDATYETKESKKEDLVFIFWAPESAPLKSKMIYASSKDAIKKKFTGIKHEWQVNGLDDIKDRSTLGEKLGGNVVVSLEGKPL.

A2 carries the N-acetylalanine modification. S3 carries the phosphoserine modification. The ADF-H domain occupies 4–153 (GVTVNDEVIK…KDRSTLGEKL (150 aa)). T6 bears the Phosphothreonine mark. Residues 30–34 (KKRKK) carry the Nuclear localization signal motif.

It belongs to the actin-binding proteins ADF family. In terms of processing, the phosphorylation of Ser-24 may prevent recognition of the nuclear localization signal.

The protein resides in the nucleus matrix. Its subcellular location is the cytoplasm. It is found in the cytoskeleton. In terms of biological role, controls reversibly actin polymerization and depolymerization in a pH-sensitive manner. It has the ability to bind G- and F-actin in a 1:1 ratio of cofilin to actin. It is the major component of intranuclear and cytoplasmic actin rods. This chain is Cofilin-2 (CFL2), found in Bos taurus (Bovine).